The sequence spans 734 residues: Photosystem I P700 chlorophyll a apoprotein A2 (734 aa).

A run of 8 helical transmembrane segments spans residues 46-69, 135-158, 175-199, 273-291, 330-353, 369-395, 417-439, and 517-535; these read IFASHFGQLAIIFLWTSGNLFHVA, LYTGALFLLCLSAISLIAGWLHLQ, LNHHLSGLFGVSSLAWAGHLVHVAI, IAHHHLAIAFLFLVAGHMY, IHFQLGLALASLGVITSLVAQHMY, AALYTHHQYIAGFIMTGAFAHGAIFFI, AIISHLSWASLFLGFHTLGLYVH, and FLVHHAIALGLHTTTLILV. Positions 559 and 568 each coordinate [4Fe-4S] cluster. 2 consecutive transmembrane segments (helical) span residues 575–596 and 643–665; these read AFYLAVFWMLNTIGWVTFYWHW and LSVWAWMFLFGHLVWATGFMFLI. Chlorophyll a is bound by residues His654, Met662, and Tyr670. Residue Trp671 participates in phylloquinone binding. Residues 707–727 form a helical membrane-spanning segment; sequence LVGLAHFSVGYIFTYAAFLIA.

This sequence belongs to the PsaA/PsaB family. In terms of assembly, the PsaA/B heterodimer binds the P700 chlorophyll special pair and subsequent electron acceptors. PSI consists of a core antenna complex that captures photons, and an electron transfer chain that converts photonic excitation into a charge separation. The eukaryotic PSI reaction center is composed of at least 11 subunits. The cofactor is P700 is a chlorophyll a/chlorophyll a' dimer, A0 is one or more chlorophyll a, A1 is one or both phylloquinones and FX is a shared 4Fe-4S iron-sulfur center..

It is found in the plastid. The protein resides in the chloroplast thylakoid membrane. The catalysed reaction is reduced [plastocyanin] + hnu + oxidized [2Fe-2S]-[ferredoxin] = oxidized [plastocyanin] + reduced [2Fe-2S]-[ferredoxin]. PsaA and PsaB bind P700, the primary electron donor of photosystem I (PSI), as well as the electron acceptors A0, A1 and FX. PSI is a plastocyanin-ferredoxin oxidoreductase, converting photonic excitation into a charge separation, which transfers an electron from the donor P700 chlorophyll pair to the spectroscopically characterized acceptors A0, A1, FX, FA and FB in turn. Oxidized P700 is reduced on the lumenal side of the thylakoid membrane by plastocyanin. In Dioscorea elephantipes (Elephant's foot yam), this protein is Photosystem I P700 chlorophyll a apoprotein A2.